The primary structure comprises 178 residues: ATP synthase subunit delta (178 aa).

Belongs to the ATPase delta chain family. As to quaternary structure, F-type ATPases have 2 components, F(1) - the catalytic core - and F(0) - the membrane proton channel. F(1) has five subunits: alpha(3), beta(3), gamma(1), delta(1), epsilon(1). F(0) has three main subunits: a(1), b(2) and c(10-14). The alpha and beta chains form an alternating ring which encloses part of the gamma chain. F(1) is attached to F(0) by a central stalk formed by the gamma and epsilon chains, while a peripheral stalk is formed by the delta and b chains.

The protein resides in the cell inner membrane. F(1)F(0) ATP synthase produces ATP from ADP in the presence of a proton or sodium gradient. F-type ATPases consist of two structural domains, F(1) containing the extramembraneous catalytic core and F(0) containing the membrane proton channel, linked together by a central stalk and a peripheral stalk. During catalysis, ATP synthesis in the catalytic domain of F(1) is coupled via a rotary mechanism of the central stalk subunits to proton translocation. Its function is as follows. This protein is part of the stalk that links CF(0) to CF(1). It either transmits conformational changes from CF(0) to CF(1) or is implicated in proton conduction. The protein is ATP synthase subunit delta of Stutzerimonas stutzeri (strain A1501) (Pseudomonas stutzeri).